Here is a 61-residue protein sequence, read N- to C-terminus: MPTPKKKTSRSKRDMRRSHDGLTAPAIAVEKKTGELVRPHRAHKGADGALYYKGKQISAAK.

Residues 1–16 (MPTPKKKTSRSKRDMR) show a composition bias toward basic residues. The interval 1-47 (MPTPKKKTSRSKRDMRRSHDGLTAPAIAVEKKTGELVRPHRAHKGAD) is disordered. The segment covering 29–38 (VEKKTGELVR) has biased composition (basic and acidic residues).

It belongs to the bacterial ribosomal protein bL32 family.

This is Large ribosomal subunit protein bL32 from Bdellovibrio bacteriovorus (strain ATCC 15356 / DSM 50701 / NCIMB 9529 / HD100).